We begin with the raw amino-acid sequence, 542 residues long: ABC transport system permease protein p69 (542 aa).

The next 12 helical transmembrane spans lie at 23–43 (ALAI…FSGF), 77–97 (IFYV…FSYL), 114–134 (FTIF…NNLF), 140–160 (ATLT…TAFF), 212–232 (LSIA…GGTV), 236–256 (LVLI…ASVF), 287–307 (VMIY…LVQL), 350–370 (TQAI…GFLA), 386–406 (LLVI…PIIF), 412–432 (IIFV…TINF), 481–501 (LVVF…NFFE), and 509–529 (GTIT…LMAV). The 178-residue stretch at 349 to 526 (TTQAISLITL…VYLMVFEVIL (178 aa)) folds into the ABC transmembrane type-1 domain.

It belongs to the binding-protein-dependent transport system permease family.

It is found in the cell membrane. In terms of biological role, probably part of a high-affinity transport system. This chain is ABC transport system permease protein p69 (p69), found in Mycoplasma pneumoniae (strain ATCC 29342 / M129 / Subtype 1) (Mycoplasmoides pneumoniae).